A 394-amino-acid chain; its full sequence is Phosphoglycerate kinase (394 aa).

Substrate is bound by residues 21-23, Arg36, 59-62, Arg118, and Arg151; these read DFN and HLGR. Ser183 carries the phosphoserine modification. Residue Lys201 participates in ATP binding. Thr299 carries the phosphothreonine modification. ATP is bound by residues Glu323 and 350-353; that span reads GGDS.

It belongs to the phosphoglycerate kinase family. As to quaternary structure, monomer.

The protein resides in the cytoplasm. It catalyses the reaction (2R)-3-phosphoglycerate + ATP = (2R)-3-phospho-glyceroyl phosphate + ADP. The protein operates within carbohydrate degradation; glycolysis; pyruvate from D-glyceraldehyde 3-phosphate: step 2/5. The polypeptide is Phosphoglycerate kinase (Halalkalibacterium halodurans (strain ATCC BAA-125 / DSM 18197 / FERM 7344 / JCM 9153 / C-125) (Bacillus halodurans)).